Reading from the N-terminus, the 88-residue chain is Small ribosomal subunit protein bS20 (88 aa).

The tract at residues 1 to 27 (MANSKTAKKRAIQSEKRRQHNASRRSM) is disordered.

It belongs to the bacterial ribosomal protein bS20 family.

Its function is as follows. Binds directly to 16S ribosomal RNA. This chain is Small ribosomal subunit protein bS20, found in Shewanella amazonensis (strain ATCC BAA-1098 / SB2B).